A 234-amino-acid chain; its full sequence is Biotin transport ATP-binding protein BioM (234 aa).

The ABC transporter domain maps to 1 to 230; that stretch reads MQAIDIGHVT…YIAAMQALAR (230 aa). ATP is bound at residue 35 to 42; that stretch reads GRNGAGKS.

It belongs to the ABC transporter superfamily. As to quaternary structure, part of a biotin transporter holocomplex composed of BioM, BioN and BioY. BioMN complexes can be readily purified, but not BioMY complexes. Only the BioMNY complex has ATPase activity.

It localises to the cell inner membrane. Functionally, required for biotin uptake under very low (pM) biotin concentrations but not under higher (nM) concentrations. This is Biotin transport ATP-binding protein BioM (bioM) from Rhodobacter capsulatus (strain ATCC BAA-309 / NBRC 16581 / SB1003).